Here is a 388-residue protein sequence, read N- to C-terminus: Chorismate synthase (388 aa).

NADP(+) is bound by residues Arg-39 and Arg-45. Residues 130 to 132 (RSS), 251 to 252 (NA), Gly-296, 311 to 315 (KPIPT), and Arg-337 contribute to the FMN site.

The protein belongs to the chorismate synthase family. In terms of assembly, homotetramer. FMNH2 is required as a cofactor.

The enzyme catalyses 5-O-(1-carboxyvinyl)-3-phosphoshikimate = chorismate + phosphate. It functions in the pathway metabolic intermediate biosynthesis; chorismate biosynthesis; chorismate from D-erythrose 4-phosphate and phosphoenolpyruvate: step 7/7. Functionally, catalyzes the anti-1,4-elimination of the C-3 phosphate and the C-6 proR hydrogen from 5-enolpyruvylshikimate-3-phosphate (EPSP) to yield chorismate, which is the branch point compound that serves as the starting substrate for the three terminal pathways of aromatic amino acid biosynthesis. This reaction introduces a second double bond into the aromatic ring system. The sequence is that of Chorismate synthase from Streptococcus pyogenes serotype M2 (strain MGAS10270).